Reading from the N-terminus, the 579-residue chain is Protein disulfide isomerase-like 1-3 (579 aa).

Positions 1–25 (MASSSTSISLLLFVSFILLLVNSRA) are cleaved as a signal peptide. Residue N27 is glycosylated (N-linked (GlcNAc...) asparagine). Composition is skewed to basic and acidic residues over residues 44–69 (EESK…RDFE) and 80–89 (EFHHGDHGYE). The interval 44 to 91 (EESKEQSHGGGSYHEEEHDHQHRDFENYDDLEQGGGEFHHGDHGYEEE) is disordered. Residues 81–204 (FHHGDHGYEE…IVTWLKKKAS (124 aa)) form the Thioredoxin 1 domain. 2 N-linked (GlcNAc...) asparagine glycosylation sites follow: N108 and N115. Catalysis depends on nucleophile residues C128 and C131. Residues C128 and C131 are joined by a disulfide bond. N209, N293, N313, and N338 each carry an N-linked (GlcNAc...) asparagine glycan. The Thioredoxin 2 domain maps to 416–546 (DFLADKLKPF…LYKFLKKHAS (131 aa)). Active-site nucleophile residues include C467 and C470. C467 and C470 are disulfide-bonded. An N-linked (GlcNAc...) asparagine glycan is attached at N520. A disordered region spans residues 558 to 579 (EPVISTMKSDEKIEGDSSKDEL). Basic and acidic residues predominate over residues 565-579 (KSDEKIEGDSSKDEL). The Prevents secretion from ER signature appears at 576–579 (KDEL).

Belongs to the protein disulfide isomerase family. Widely expressed.

The protein localises to the endoplasmic reticulum lumen. The enzyme catalyses Catalyzes the rearrangement of -S-S- bonds in proteins.. Its function is as follows. Acts as a protein-folding catalyst that interacts with nascent polypeptides to catalyze the formation, isomerization, and reduction or oxidation of disulfide bonds. This is Protein disulfide isomerase-like 1-3 (PDIL1-3) from Arabidopsis thaliana (Mouse-ear cress).